Here is a 466-residue protein sequence, read N- to C-terminus: Alpha-1A adrenergic receptor (466 aa).

Residues 1 to 27 (MVLLSENASEGSNCTHPPAQVNISKAI) are Extracellular-facing. N-linked (GlcNAc...) asparagine glycans are attached at residues N7, N13, and N22. The helical transmembrane segment at 28 to 51 (LLGVILGGLIIFGVLGNILVILSV) threads the bilayer. The Cytoplasmic segment spans residues 52 to 64 (ACHRHLHSVTHYY). A helical membrane pass occupies residues 65-88 (IVNLAVADLLLTSTVLPFSAIFEI). The Extracellular portion of the chain corresponds to 89–99 (LGYWAFGRVFC). A disulfide bond links C99 and C176. A helical membrane pass occupies residues 100–122 (NIWAAVDVLCCTASIMGLCIISI). Residues 123–143 (DRYIGVSYPLRYPTIVTQRRG) lie on the Cytoplasmic side of the membrane. The chain crosses the membrane as a helical span at residues 144–167 (VRALLCVWALSLVISIGPLFGWRQ). Residues 168-181 (QAPEDETICQINEE) are Extracellular-facing. The chain crosses the membrane as a helical span at residues 182 to 205 (PGYVLFSALGSFYVPLTIILVMYC). Residues 206 to 273 (RVYVVAKRES…FSREKKAAKT (68 aa)) lie on the Cytoplasmic side of the membrane. S215 carries the phosphoserine; by PKA modification. A helical membrane pass occupies residues 274–297 (LGIVVGCFVLCWLPFFLVMPIGSF). At 298 to 305 (FPNFKPPE) the chain is on the extracellular side. Residues 306–329 (TVFKIVFWLGYLNSCINPIIYPCS) traverse the membrane as a helical segment. At 330-466 (SQEFKKAFQN…ISLGENGEEV (137 aa)) the chain is on the cytoplasmic side. The short motif at 334–349 (KKAFQNVLRIQCLRRR) is the Nuclear localization signal element. Residue C345 is the site of S-palmitoyl cysteine attachment.

This sequence belongs to the G-protein coupled receptor 1 family. Adrenergic receptor subfamily. ADRA1A sub-subfamily. In terms of assembly, homo- and heterooligomer. Heterooligomerizes with ADRA1B homooligomers in cardiac myocytes. Interacts with CAVIN4.

It is found in the nucleus membrane. The protein localises to the cell membrane. The protein resides in the cytoplasm. It localises to the membrane. Its subcellular location is the caveola. In terms of biological role, this alpha-adrenergic receptor mediates its action by association with G proteins that activate a phosphatidylinositol-calcium second messenger system. Its effect is mediated by G(q) and G(11) proteins. Nuclear ADRA1A-ADRA1B heterooligomers regulate phenylephrine (PE)-stimulated ERK signaling in cardiac myocytes. This chain is Alpha-1A adrenergic receptor (Adra1a), found in Mus musculus (Mouse).